Here is a 66-residue protein sequence, read N- to C-terminus: uncharacterized protein (66 aa).

An N-terminal signal peptide occupies residues 1-19 (MRRLYRHLASFFLLPSCPG).

This is an uncharacterized protein from Saccharomyces cerevisiae (strain ATCC 204508 / S288c) (Baker's yeast).